The chain runs to 73 residues: uncharacterized protein (73 aa).

This sequence belongs to the asfivirus I73R family.

The protein resides in the virion. This is an uncharacterized protein from Ornithodoros (relapsing fever ticks).